A 93-amino-acid polypeptide reads, in one-letter code: Small ribosomal subunit protein uS19 (93 aa).

Belongs to the universal ribosomal protein uS19 family.

Its function is as follows. Protein S19 forms a complex with S13 that binds strongly to the 16S ribosomal RNA. In Dehalococcoides mccartyi (strain ATCC BAA-2100 / JCM 16839 / KCTC 5957 / BAV1), this protein is Small ribosomal subunit protein uS19.